A 65-amino-acid chain; its full sequence is Large ribosomal subunit protein uL30 (65 aa).

It belongs to the universal ribosomal protein uL30 family. In terms of assembly, part of the 50S ribosomal subunit.

This Brucella suis (strain ATCC 23445 / NCTC 10510) protein is Large ribosomal subunit protein uL30.